Reading from the N-terminus, the 521-residue chain is CD166 antigen (521 aa).

Residues 1–465 (GSPVFIAFRS…NREQVNHRAT (465 aa)) lie on the Extracellular side of the membrane. Asparagine 33, asparagine 105, asparagine 244, asparagine 299, asparagine 395, asparagine 418, and asparagine 437 each carry an N-linked (GlcNAc...) asparagine glycan. One can recognise an Ig-like V-type 2 domain in the interval 63 to 172 (PTIVKVFKQP…YGPSGQKTVQ (110 aa)). Cystine bridges form between cysteine 95-cysteine 158, cysteine 208-cysteine 251, cysteine 292-cysteine 330, and cysteine 373-cysteine 423. Ig-like C2-type domains follow at residues 183–266 (PTEQ…TAIT), 271–347 (DLSL…ESLT), and 354–439 (PQIK…LNVS). Residues 466-487 (LIVGIVLRLLHGALVAGVVYWL) traverse the membrane as a helical segment. Residues 488–521 (YVKKSKTASKHVNKDLGNLEENKKLEQNNHRTEA) lie on the Cytoplasmic side of the membrane. The segment at 500–521 (NKDLGNLEENKKLEQNNHRTEA) is disordered. Over residues 507–521 (EENKKLEQNNHRTEA) the composition is skewed to basic and acidic residues.

In terms of assembly, homodimer. Interacts (via extracellular domain) with CD6 (via extracellular domain). Homodimerization and interaction with CD6 involve the same region and cannot occur simultaneously. The affinity for CD6 is much higher than the affinity for self-association. Interacts (via glycosylated extracellular domain) with LGALS1 and LGALS3. Interaction with LGALS1 or LGALS3 inhibits interaction with CD6. Glycosylated.

The protein resides in the cell membrane. Its subcellular location is the cell projection. The protein localises to the axon. It is found in the dendrite. Cell adhesion molecule that mediates both heterotypic cell-cell contacts via its interaction with CD6, as well as homotypic cell-cell contacts. Promotes T-cell activation and proliferation via its interactions with CD6. Contributes to the formation and maturation of the immunological synapse via its interactions with CD6. Mediates homotypic interactions with cells that express ALCAM. Mediates attachment of dendritic cells onto endothelial cells via homotypic interaction. Inhibits endothelial cell migration and promotes endothelial tube formation via homotypic interactions. Required for normal organization of the lymph vessel network. Required for normal hematopoietic stem cell engraftment in the bone marrow. Plays a role in hematopoiesis; required for normal numbers of hematopoietic stem cells in bone marrow. Promotes in vitro osteoblast proliferation and differentiation. Promotes neurite extension, axon growth and axon guidance; axons grow preferentially on surfaces that contain ALCAM. Mediates outgrowth and pathfinding for retinal ganglion cell axons. This Canis lupus familiaris (Dog) protein is CD166 antigen (ALCAM).